Here is a 125-residue protein sequence, read N- to C-terminus: Protein Turandot F (125 aa).

The N-terminal stretch at 1 to 19 (MKTVILFGFLLALLGYLEA) is a signal peptide.

This sequence belongs to the Turandot family.

Its subcellular location is the secreted. In terms of biological role, a humoral factor that may play a role in stress tolerance. The polypeptide is Protein Turandot F (Drosophila melanogaster (Fruit fly)).